The primary structure comprises 343 residues: N-acetyl-gamma-glutamyl-phosphate reductase (343 aa).

Cys-152 is a catalytic residue.

Belongs to the NAGSA dehydrogenase family. Type 1 subfamily.

It is found in the cytoplasm. It carries out the reaction N-acetyl-L-glutamate 5-semialdehyde + phosphate + NADP(+) = N-acetyl-L-glutamyl 5-phosphate + NADPH + H(+). It participates in amino-acid biosynthesis; L-arginine biosynthesis; N(2)-acetyl-L-ornithine from L-glutamate: step 3/4. Functionally, catalyzes the NADPH-dependent reduction of N-acetyl-5-glutamyl phosphate to yield N-acetyl-L-glutamate 5-semialdehyde. The chain is N-acetyl-gamma-glutamyl-phosphate reductase from Methanopyrus kandleri (strain AV19 / DSM 6324 / JCM 9639 / NBRC 100938).